The following is a 282-amino-acid chain: Cell division protein DivIB (282 aa).

Topologically, residues 1–59 are cytoplasmic; that stretch reads MLDDRSAIEHHKYSQRLTELERRSAAAQQRQQKKKPPKMHVGNKIRGIKIKRYVSNGER. A disordered region spans residues 19–41; it reads ELERRSAAAQQRQQKKKPPKMHV. Residues 31-41 show a composition bias toward basic residues; that stretch reads QQKKKPPKMHV. The helical transmembrane segment at 60 to 80 threads the bilayer; that stretch reads VLKLVVLFSAILLFMLYIISP. Topologically, residues 81–282 are extracellular; sequence LSKITTLHVT…YSYDYGSKDK (202 aa). One can recognise a POTRA domain in the interval 82–153; that stretch reads SKITTLHVTG…QSLQISVKEN (72 aa).

The protein belongs to the FtsQ/DivIB family. DivIB subfamily.

It is found in the cell membrane. Functionally, cell division protein that may be involved in stabilizing or promoting the assembly of the division complex. The polypeptide is Cell division protein DivIB (Limosilactobacillus reuteri (strain ATCC 55730 / SD2112) (Lactobacillus reuteri)).